The sequence spans 400 residues: Serpin E3 (400 aa).

An N-terminal signal peptide occupies residues 1–19 (MQSLLLALLLLPVCSPGGA). N-linked (GlcNAc...) asparagine glycosylation is present at asparagine 46.

Belongs to the serpin family.

It is found in the secreted. In terms of biological role, probable serine protease inhibitor. This is Serpin E3 (SERPINE3) from Bos taurus (Bovine).